We begin with the raw amino-acid sequence, 65 residues long: Conotoxin Bu19 (65 aa).

Residues 1 to 21 form the signal peptide; it reads MGMRMVFTVFLLVVLATTVVS. The propeptide occupies 22 to 48; it reads FTSDRASDGRNAAANDKASDLAALAVR. Intrachain disulfides connect C50/C56 and C51/C64. A Cysteine amide modification is found at C64.

Belongs to the conotoxin A superfamily. As to expression, expressed by the venom duct.

It is found in the secreted. This is Conotoxin Bu19 from Conus bullatus (Bubble cone).